The primary structure comprises 63 residues: Large ribosomal subunit protein uL29 (63 aa).

It belongs to the universal ribosomal protein uL29 family.

The sequence is that of Large ribosomal subunit protein uL29 from Histophilus somni (strain 129Pt) (Haemophilus somnus).